The sequence spans 385 residues: 1-deoxy-D-xylulose 5-phosphate reductoisomerase (385 aa).

6 residues coordinate NADPH: Thr-10, Gly-11, Ser-12, Ile-13, Lys-37, and Asn-124. Lys-125 provides a ligand contact to 1-deoxy-D-xylulose 5-phosphate. Glu-126 lines the NADPH pocket. Asp-150 is a Mn(2+) binding site. Ser-151, Glu-152, Ser-176, and His-199 together coordinate 1-deoxy-D-xylulose 5-phosphate. Glu-152 serves as a coordination point for Mn(2+). Gly-205 is a binding site for NADPH. The 1-deoxy-D-xylulose 5-phosphate site is built by Ser-212, Asn-217, Lys-218, and Glu-221. Glu-221 contacts Mn(2+).

Belongs to the DXR family. It depends on Mg(2+) as a cofactor. Mn(2+) serves as cofactor.

It catalyses the reaction 2-C-methyl-D-erythritol 4-phosphate + NADP(+) = 1-deoxy-D-xylulose 5-phosphate + NADPH + H(+). It participates in isoprenoid biosynthesis; isopentenyl diphosphate biosynthesis via DXP pathway; isopentenyl diphosphate from 1-deoxy-D-xylulose 5-phosphate: step 1/6. Its function is as follows. Catalyzes the NADPH-dependent rearrangement and reduction of 1-deoxy-D-xylulose-5-phosphate (DXP) to 2-C-methyl-D-erythritol 4-phosphate (MEP). In Clostridium botulinum (strain Kyoto / Type A2), this protein is 1-deoxy-D-xylulose 5-phosphate reductoisomerase.